We begin with the raw amino-acid sequence, 508 residues long: Cobyric acid synthase (508 aa).

One can recognise a GATase cobBQ-type domain in the interval 266–464; it reads SLRIAVVAYP…AHGLFESTEV (199 aa). Residue C347 is the Nucleophile of the active site. H456 is a catalytic residue.

This sequence belongs to the CobB/CobQ family. CobQ subfamily.

Its pathway is cofactor biosynthesis; adenosylcobalamin biosynthesis. Catalyzes amidations at positions B, D, E, and G on adenosylcobyrinic A,C-diamide. NH(2) groups are provided by glutamine, and one molecule of ATP is hydrogenolyzed for each amidation. The polypeptide is Cobyric acid synthase (Methylibium petroleiphilum (strain ATCC BAA-1232 / LMG 22953 / PM1)).